Reading from the N-terminus, the 534-residue chain is Tyrosine-protein kinase Fyn (534 aa).

A lipid anchor (N-myristoyl glycine) is attached at Gly2. Residues Cys3 and Cys6 are each lipidated (S-palmitoyl cysteine). A Phosphothreonine; by PKC modification is found at Thr12. Residues 15 to 39 (TDERDGSLTQSSGYRYGTDPTPQHY) form a disordered region. One can recognise an SH3 domain in the interval 82-143 (TGVTLFEALY…PSNYVAPVDS (62 aa)). Residues 149–246 (WYFGKLGRKD…GLCFNLTVIA (98 aa)) form the SH2 domain. The region spanning 268 to 521 (LFLEQKLGQG…YLQGFLEDYF (254 aa)) is the Protein kinase domain. ATP-binding positions include 274–282 (LGQGCFAEV) and Lys296. The active-site Proton acceptor is Asp387. Tyr417 is subject to Phosphotyrosine; by autocatalysis. Tyr528 carries the phosphotyrosine modification.

Belongs to the protein kinase superfamily. Tyr protein kinase family. SRC subfamily. Associates through its SH3 domain, to the p85 subunit of phosphatidylinositol 3-kinase. The cofactor is Mn(2+). As to expression, thymus and spleen.

The protein resides in the cytoplasm. It is found in the nucleus. It localises to the cell membrane. Its subcellular location is the perikaryon. It catalyses the reaction L-tyrosyl-[protein] + ATP = O-phospho-L-tyrosyl-[protein] + ADP + H(+). Inhibited by phosphorylation of Tyr-528 by leukocyte common antigen and activated by dephosphorylation of this site. Its function is as follows. Tyrosine-protein kinase implicated in the control of cell growth. Plays a role in the regulation of intracellular calcium levels. Required in brain development and mature brain function with important roles in the regulation of axon growth, axon guidance, and neurite extension. Role in CNTN1-mediated signaling. The polypeptide is Tyrosine-protein kinase Fyn (FYN) (Gallus gallus (Chicken)).